The sequence spans 337 residues: Biotin synthase (337 aa).

The Radical SAM core domain occupies 55–284 (YFKNTIELCS…KKTILLAGGK (230 aa)). [4Fe-4S] cluster contacts are provided by cysteine 73, cysteine 77, and cysteine 80. 3 residues coordinate [2Fe-2S] cluster: cysteine 117, cysteine 149, and cysteine 209.

It belongs to the radical SAM superfamily. Biotin synthase family. In terms of assembly, homodimer. The cofactor is [4Fe-4S] cluster. Requires [2Fe-2S] cluster as cofactor.

The catalysed reaction is (4R,5S)-dethiobiotin + (sulfur carrier)-SH + 2 reduced [2Fe-2S]-[ferredoxin] + 2 S-adenosyl-L-methionine = (sulfur carrier)-H + biotin + 2 5'-deoxyadenosine + 2 L-methionine + 2 oxidized [2Fe-2S]-[ferredoxin]. Its pathway is cofactor biosynthesis; biotin biosynthesis; biotin from 7,8-diaminononanoate: step 2/2. Functionally, catalyzes the conversion of dethiobiotin (DTB) to biotin by the insertion of a sulfur atom into dethiobiotin via a radical-based mechanism. In Caldicellulosiruptor bescii (strain ATCC BAA-1888 / DSM 6725 / KCTC 15123 / Z-1320) (Anaerocellum thermophilum), this protein is Biotin synthase.